The following is a 302-amino-acid chain: Tegument protein VP22 (302 aa).

Residues 1–10 (MASSDGDRLC) show a composition bias toward basic and acidic residues. Disordered regions lie at residues 1-42 (MASS…PDDS) and 125-170 (SFTK…SSWC). The interval 154 to 244 (RPISFSTAPK…ANEADLGEGA (91 aa)) is interaction with gE. A compositionally biased stretch (polar residues) spans 157–170 (SFSTAPKTATSSWC). The Nuclear export signal signature appears at 212 to 224 (LDRLLTGAVIRIT). Positions 243-302 (GASVSKRGHNRKTGDLQGGMGNEPMYAQVRKPKSRTDTQTTGRITNRSRARSASRTDTRK) are disordered.

It belongs to the alphaherpesvirinae VP22 tegument protein family. As to quaternary structure, interacts with gE (via C-terminus); this interaction is necessary for the recruitment of VP22/ORF9 to the Golgi and its packaging into virions. Interacts with gM (via C-terminus). Interacts with VP16/ORF10; this interaction allows the formation of a tripartite complex composed of VP16/ORF10, VP22/ORF9 and VHS/ORF17. Interacts with the capsid-binding protein ORF44. Interacts with host CGAS. Post-translationally, highly phosphorylated in the host cell. Packaging is selective for underphosphorylated forms.

It localises to the virion tegument. Its subcellular location is the host cytoplasm. The protein localises to the host nucleus. The protein resides in the host Golgi apparatus. Tegument protein that plays different roles during the time course of infection. Participates in both the accumulation of viral mRNAs and viral protein translation at late time of infection. Modulates the RNase activity of the virion host shutoff protein ORF17 probably to ensure necessary levels of key cellular mRNAs and proteins. Plays a role in microtubule reorganization that occurs after viral infection by stabilizing microtubule network. Plays a role in the inhibition of host innate immune system by targeting the CGAS enzymatic activity which is the principal cytosolic DNA sensor that detects invading viral DNA. Acts by mediating disruption of liquid-like droplets in which CGAS is activated, thereby preventing CGAS activity. In Homo sapiens (Human), this protein is Tegument protein VP22.